The primary structure comprises 162 residues: 2-C-methyl-D-erythritol 2,4-cyclodiphosphate synthase (162 aa).

2 residues coordinate a divalent metal cation: D9 and H11. 4-CDP-2-C-methyl-D-erythritol 2-phosphate contacts are provided by residues 9–11 and 35–36; these read DVH and HS. Residue H43 participates in a divalent metal cation binding. 4-CDP-2-C-methyl-D-erythritol 2-phosphate contacts are provided by residues 57 to 59, 62 to 66, 133 to 136, F140, and R143; these read DIG, FPDTD, and TTTE.

The protein belongs to the IspF family. Homotrimer. A divalent metal cation serves as cofactor.

The enzyme catalyses 4-CDP-2-C-methyl-D-erythritol 2-phosphate = 2-C-methyl-D-erythritol 2,4-cyclic diphosphate + CMP. Its pathway is isoprenoid biosynthesis; isopentenyl diphosphate biosynthesis via DXP pathway; isopentenyl diphosphate from 1-deoxy-D-xylulose 5-phosphate: step 4/6. Functionally, involved in the biosynthesis of isopentenyl diphosphate (IPP) and dimethylallyl diphosphate (DMAPP), two major building blocks of isoprenoid compounds. Catalyzes the conversion of 4-diphosphocytidyl-2-C-methyl-D-erythritol 2-phosphate (CDP-ME2P) to 2-C-methyl-D-erythritol 2,4-cyclodiphosphate (ME-CPP) with a corresponding release of cytidine 5-monophosphate (CMP). The chain is 2-C-methyl-D-erythritol 2,4-cyclodiphosphate synthase from Histophilus somni (strain 129Pt) (Haemophilus somnus).